The sequence spans 341 residues: Fructose-1,6-bisphosphatase, cytosolic (341 aa).

The Mg(2+) site is built by Glu71, Glu100, Asp121, Leu123, and Asp124. Residues 124–127, Asn215, Tyr247, Tyr267, and Lys277 contribute to the substrate site; that span reads DGSS. Residue Glu283 coordinates Mg(2+).

The protein belongs to the FBPase class 1 family. The cofactor is Mg(2+).

The protein localises to the cytoplasm. The enzyme catalyses beta-D-fructose 1,6-bisphosphate + H2O = beta-D-fructose 6-phosphate + phosphate. The protein is Fructose-1,6-bisphosphatase, cytosolic of Spinacia oleracea (Spinach).